The following is a 212-amino-acid chain: Peroxisomal membrane protein 4 (212 aa).

Transmembrane regions (helical) follow at residues 97–117 and 151–171; these read GGTH…LLFG and LKWD…LWLF. N206 carries an N-linked (GlcNAc...) asparagine glycan.

Belongs to the peroxisomal membrane protein PXMP2/4 family. As to quaternary structure, interacts with PEX19. Liver.

It localises to the peroxisome membrane. This is Peroxisomal membrane protein 4 (Pxmp4) from Rattus norvegicus (Rat).